The primary structure comprises 224 residues: MTLYTAKDISKNYQSGDEILPVLKGINLSIEHSTMTAIVGASGSGKTTLLQILGTLTKPSSGKLYFKECAVDEKNERELAAFRNASLGFIFQFHHLLPEFTTLENVMMPALIGGKNNAESRANAEDLLRRVELHHRLEHKVTNLSGGEQQRTALARALIMNPAILLADEPTGNLDSRSGEIVFDLLKNLGQERQLATIMVTHNNELAARMDRCVTLLDGSLQEE.

In terms of domain architecture, ABC transporter spans 4–224 (YTAKDISKNY…TLLDGSLQEE (221 aa)). 40-47 (GASGSGKT) is an ATP binding site.

The protein belongs to the ABC transporter superfamily. Lipoprotein translocase (TC 3.A.1.125) family. As to quaternary structure, the complex is composed of two ATP-binding proteins (LolD) and two transmembrane proteins (LolC and LolE).

Its subcellular location is the cell inner membrane. Part of the ABC transporter complex LolCDE involved in the translocation of mature outer membrane-directed lipoproteins, from the inner membrane to the periplasmic chaperone, LolA. Responsible for the formation of the LolA-lipoprotein complex in an ATP-dependent manner. The polypeptide is Lipoprotein-releasing system ATP-binding protein LolD (Desulfotalea psychrophila (strain LSv54 / DSM 12343)).